A 303-amino-acid chain; its full sequence is Movement protein (303 aa).

The protein belongs to the tobamovirus movement protein family.

Its subcellular location is the host cytoplasm. The protein localises to the host cytoskeleton. It is found in the host cell junction. It localises to the host plasmodesma. Transports viral genome to neighboring plant cells directly through plasmosdesmata, without any budding. The movement protein allows efficient cell to cell propagation, by bypassing the host cell wall barrier. Forms a ribonucleoprotein complex with viral RNA. Binds microtubules and modulates microtubule stability. Can bind double-stranded DNA. This is Movement protein (MP) from Cymbidium (ORSV).